Here is a 328-residue protein sequence, read N- to C-terminus: Nucleotide-binding protein BL0705 (328 aa).

The interval Met1–Pro35 is disordered. The span at Ala13–Pro29 shows a compositional bias: low complexity. Gly46–Ser53 serves as a coordination point for ATP. A GTP-binding site is contributed by Asp101 to Ser104.

The protein belongs to the RapZ-like family.

Its function is as follows. Displays ATPase and GTPase activities. This chain is Nucleotide-binding protein BL0705, found in Bifidobacterium longum (strain NCC 2705).